We begin with the raw amino-acid sequence, 1208 residues long: Lysine-specific demethylase JMJ17 (1208 aa).

The PHD-type 1; degenerate zinc-finger motif lies at M1–T36. Residues C4, C7, C30, and C33 each contribute to the Zn(2+) site. A JmjC domain is found at E126–R292. Fe cation is bound by residues H172, E174, and H260. C369, C372, C383, C385, C392, H395, C400, and C402 together coordinate Zn(2+). The C5HC2 zinc-finger motif lies at C369–M421. A Nuclear localization signal motif is present at residues S613 to K620. The PHD-type 2 zinc finger occupies M1099–L1145. Zn(2+) is bound by residues C1102, C1104, C1116, C1119, H1124, C1127, C1139, and C1142.

This sequence belongs to the JARID1 histone demethylase family. Requires Fe(2+) as cofactor. As to expression, expressed in inflorescences, roots, seedlings and siliques, and, at low levels, in leaves and stems.

The protein resides in the nucleus. The enzyme catalyses N(6),N(6),N(6)-trimethyl-L-lysyl(4)-[histone H3] + 2-oxoglutarate + O2 = N(6),N(6)-dimethyl-L-lysyl(4)-[histone H3] + formaldehyde + succinate + CO2. It carries out the reaction N(6),N(6)-dimethyl-L-lysyl(4)-[histone H3] + 2-oxoglutarate + O2 = N(6)-methyl-L-lysyl(4)-[histone H3] + formaldehyde + succinate + CO2. It catalyses the reaction N(6)-methyl-L-lysyl(4)-[histone H3] + 2-oxoglutarate + O2 = L-lysyl(4)-[histone H3] + formaldehyde + succinate + CO2. The catalysed reaction is N(6),N(6),N(6)-trimethyl-L-lysyl(4)-[histone H3] + 3 2-oxoglutarate + 3 O2 = L-lysyl(4)-[histone H3] + 3 formaldehyde + 3 succinate + 3 CO2. Functions as a histone H3 'Lys-4' (H3K4me) demethylase involved in the regulation of gene expression. Active on H3K4me1, H3K4me2 and H3K4me3. Repressor of the abscisic acid (ABA) signaling pathway, especially during stomatal closure regulation. Negative regulator of responses to dehydration stress by binding directly to the chromatin of SRK2E/OST1 and demethylating H3K4me3 to regulates its expression. Together with JMJ14 and JMJ16, required for plant growth and development. The protein is Lysine-specific demethylase JMJ17 of Arabidopsis thaliana (Mouse-ear cress).